The chain runs to 248 residues: Large ribosomal subunit protein uL4 (248 aa).

The tract at residues 44 to 109 is disordered; the sequence is QDTGTDEYAG…LDINTKERKL (66 aa). Basic and acidic residues predominate over residues 92–109; it reads PKAEKDRGLDINTKERKL.

It belongs to the universal ribosomal protein uL4 family. In terms of assembly, part of the 50S ribosomal subunit.

In terms of biological role, one of the primary rRNA binding proteins, this protein initially binds near the 5'-end of the 23S rRNA. It is important during the early stages of 50S assembly. It makes multiple contacts with different domains of the 23S rRNA in the assembled 50S subunit and ribosome. Functionally, forms part of the polypeptide exit tunnel. The protein is Large ribosomal subunit protein uL4 of Natronomonas pharaonis (strain ATCC 35678 / DSM 2160 / CIP 103997 / JCM 8858 / NBRC 14720 / NCIMB 2260 / Gabara) (Halobacterium pharaonis).